We begin with the raw amino-acid sequence, 351 residues long: Ion-translocating oxidoreductase complex subunit D (351 aa).

Transmembrane regions (helical) follow at residues 18-38, 40-60, 87-107, and 121-141; these read IMLL…YFFG, GSLI…GAVL, LPPL…IVIA, and PAMV…TSWL. Position 185 is an FMN phosphoryl threonine (Thr-185). Helical transmembrane passes span 211–231, 241–261, 264–284, 298–318, and 320–340; these read VLAG…GLLL, IPVS…MIAP, FASP…FFIA, LIFG…GGYP, and GVAF…HYTQ.

The protein belongs to the NqrB/RnfD family. The complex is composed of six subunits: RnfA, RnfB, RnfC, RnfD, RnfE and RnfG. It depends on FMN as a cofactor.

The protein localises to the cell inner membrane. Part of a membrane-bound complex that couples electron transfer with translocation of ions across the membrane. The protein is Ion-translocating oxidoreductase complex subunit D of Yersinia pseudotuberculosis serotype I (strain IP32953).